A 217-amino-acid chain; its full sequence is Uracil-DNA glycosylase (217 aa).

Asp62 acts as the Proton acceptor in catalysis.

Belongs to the uracil-DNA glycosylase (UDG) superfamily. UNG family.

Its subcellular location is the cytoplasm. The enzyme catalyses Hydrolyzes single-stranded DNA or mismatched double-stranded DNA and polynucleotides, releasing free uracil.. Excises uracil residues from the DNA which can arise as a result of misincorporation of dUMP residues by DNA polymerase or due to deamination of cytosine. In Streptococcus thermophilus (strain ATCC BAA-491 / LMD-9), this protein is Uracil-DNA glycosylase.